Reading from the N-terminus, the 320-residue chain is MTAGQWRSHLTDDQQRQVRDLVTVATQVDGVAPVGEQVLRELAQQRTEHLLVEDQSPGKSAIGYLNLSPAHGADAAMAELVVHPQARRRGIATAMVRAALAKTGGRNQFWAHGTLAPARATASALGLTPVRELVQMRRSLRQLPEPVIPNGLQIRTYAGTEDDAELLRVNNAAFAYHPEQGGWTEADLAERRGEPWFDPAGLFLALEGSEGAEDSPSGQPRLLGFHWTKIHLDDPGLGEVYVLGVDPAAQGRGLGRTLTMIGLRSLTQRLGDRDLGHESTVMLYVESDNIAAVRTYQGLGFSTHSVDTAYALAAPDAALA.

N-acetyltransferase domains follow at residues Ser8 to Arg141 and Leu152 to Ala320. Position 36 (Glu36) interacts with 1D-myo-inositol 2-(L-cysteinylamino)-2-deoxy-alpha-D-glucopyranoside. Acetyl-CoA-binding positions include Leu80 to Val82 and Arg88 to Thr93. Residues Glu179, Lys229, and Glu239 each contribute to the 1D-myo-inositol 2-(L-cysteinylamino)-2-deoxy-alpha-D-glucopyranoside site. Acetyl-CoA contacts are provided by residues Leu243–Val245 and Gln250–Arg256. Position 284 (Tyr284) interacts with 1D-myo-inositol 2-(L-cysteinylamino)-2-deoxy-alpha-D-glucopyranoside. Position 289-294 (Asn289–Arg294) interacts with acetyl-CoA.

This sequence belongs to the acetyltransferase family. MshD subfamily. As to quaternary structure, monomer.

It carries out the reaction 1D-myo-inositol 2-(L-cysteinylamino)-2-deoxy-alpha-D-glucopyranoside + acetyl-CoA = mycothiol + CoA + H(+). Its function is as follows. Catalyzes the transfer of acetyl from acetyl-CoA to desacetylmycothiol (Cys-GlcN-Ins) to form mycothiol. In Mycobacterium ulcerans (strain Agy99), this protein is Mycothiol acetyltransferase.